Consider the following 287-residue polypeptide: Phosphatidylserine decarboxylase proenzyme (287 aa).

Active-site charge relay system; for autoendoproteolytic cleavage activity residues include Asp-89, His-146, and Ser-252. Residue Ser-252 is the Schiff-base intermediate with substrate; via pyruvic acid; for decarboxylase activity of the active site. Ser-252 carries the pyruvic acid (Ser); by autocatalysis modification.

It belongs to the phosphatidylserine decarboxylase family. PSD-B subfamily. Prokaryotic type I sub-subfamily. As to quaternary structure, heterodimer of a large membrane-associated beta subunit and a small pyruvoyl-containing alpha subunit. Pyruvate serves as cofactor. Is synthesized initially as an inactive proenzyme. Formation of the active enzyme involves a self-maturation process in which the active site pyruvoyl group is generated from an internal serine residue via an autocatalytic post-translational modification. Two non-identical subunits are generated from the proenzyme in this reaction, and the pyruvate is formed at the N-terminus of the alpha chain, which is derived from the carboxyl end of the proenzyme. The autoendoproteolytic cleavage occurs by a canonical serine protease mechanism, in which the side chain hydroxyl group of the serine supplies its oxygen atom to form the C-terminus of the beta chain, while the remainder of the serine residue undergoes an oxidative deamination to produce ammonia and the pyruvoyl prosthetic group on the alpha chain. During this reaction, the Ser that is part of the protease active site of the proenzyme becomes the pyruvoyl prosthetic group, which constitutes an essential element of the active site of the mature decarboxylase.

The protein resides in the cell membrane. It carries out the reaction a 1,2-diacyl-sn-glycero-3-phospho-L-serine + H(+) = a 1,2-diacyl-sn-glycero-3-phosphoethanolamine + CO2. Its pathway is phospholipid metabolism; phosphatidylethanolamine biosynthesis; phosphatidylethanolamine from CDP-diacylglycerol: step 2/2. Catalyzes the formation of phosphatidylethanolamine (PtdEtn) from phosphatidylserine (PtdSer). This Shewanella amazonensis (strain ATCC BAA-1098 / SB2B) protein is Phosphatidylserine decarboxylase proenzyme.